The chain runs to 486 residues: UDP-N-acetylmuramoyl-L-alanyl-D-glutamate--2,6-diaminopimelate ligase (486 aa).

Ser-26 is a binding site for UDP-N-acetyl-alpha-D-muramoyl-L-alanyl-D-glutamate. 104-110 (GTNGKTS) serves as a coordination point for ATP. Residues 152 to 153 (TT), Ser-179, Gln-185, and Arg-187 contribute to the UDP-N-acetyl-alpha-D-muramoyl-L-alanyl-D-glutamate site. Position 219 is an N6-carboxylysine (Lys-219). Meso-2,6-diaminopimelate is bound by residues Arg-383, 407 to 410 (DNPR), Gly-455, and Glu-459. The Meso-diaminopimelate recognition motif signature appears at 407–410 (DNPR).

It belongs to the MurCDEF family. MurE subfamily. Requires Mg(2+) as cofactor. In terms of processing, carboxylation is probably crucial for Mg(2+) binding and, consequently, for the gamma-phosphate positioning of ATP.

It is found in the cytoplasm. It carries out the reaction UDP-N-acetyl-alpha-D-muramoyl-L-alanyl-D-glutamate + meso-2,6-diaminopimelate + ATP = UDP-N-acetyl-alpha-D-muramoyl-L-alanyl-gamma-D-glutamyl-meso-2,6-diaminopimelate + ADP + phosphate + H(+). It participates in cell wall biogenesis; peptidoglycan biosynthesis. Catalyzes the addition of meso-diaminopimelic acid to the nucleotide precursor UDP-N-acetylmuramoyl-L-alanyl-D-glutamate (UMAG) in the biosynthesis of bacterial cell-wall peptidoglycan. The sequence is that of UDP-N-acetylmuramoyl-L-alanyl-D-glutamate--2,6-diaminopimelate ligase from Caulobacter vibrioides (strain ATCC 19089 / CIP 103742 / CB 15) (Caulobacter crescentus).